The sequence spans 123 residues: Large ribosomal subunit protein bL12 (123 aa).

This sequence belongs to the bacterial ribosomal protein bL12 family. As to quaternary structure, homodimer. Part of the ribosomal stalk of the 50S ribosomal subunit. Forms a multimeric L10(L12)X complex, where L10 forms an elongated spine to which 2 to 4 L12 dimers bind in a sequential fashion. Binds GTP-bound translation factors.

Its function is as follows. Forms part of the ribosomal stalk which helps the ribosome interact with GTP-bound translation factors. Is thus essential for accurate translation. The sequence is that of Large ribosomal subunit protein bL12 from Rhodopseudomonas palustris (strain HaA2).